The sequence spans 314 residues: DNA-directed RNA polymerase subunit alpha (314 aa).

An alpha N-terminal domain (alpha-NTD) region spans residues 1 to 227; that stretch reads MTTFEIECIE…ELLFPLKEIN (227 aa). Residues 237–314 are alpha C-terminal domain (alpha-CTD); the sequence is IEDSKINQIL…LPKEKTSKSN (78 aa).

Belongs to the RNA polymerase alpha chain family. In terms of assembly, in plastids the minimal PEP RNA polymerase catalytic core is composed of four subunits: alpha, beta, beta', and beta''. When a (nuclear-encoded) sigma factor is associated with the core the holoenzyme is formed, which can initiate transcription.

It is found in the plastid. It localises to the chloroplast. It carries out the reaction RNA(n) + a ribonucleoside 5'-triphosphate = RNA(n+1) + diphosphate. Its function is as follows. DNA-dependent RNA polymerase catalyzes the transcription of DNA into RNA using the four ribonucleoside triphosphates as substrates. This is DNA-directed RNA polymerase subunit alpha from Pyrenomonas salina.